Consider the following 165-residue polypeptide: NADPH-dependent 7-cyano-7-deazaguanine reductase (165 aa).

Cysteine 56 acts as the Thioimide intermediate in catalysis. Catalysis depends on aspartate 63, which acts as the Proton donor. Residues 78 to 80 (VES) and 97 to 98 (HE) each bind substrate.

Belongs to the GTP cyclohydrolase I family. QueF type 1 subfamily.

It is found in the cytoplasm. The catalysed reaction is 7-aminomethyl-7-carbaguanine + 2 NADP(+) = 7-cyano-7-deazaguanine + 2 NADPH + 3 H(+). Its pathway is tRNA modification; tRNA-queuosine biosynthesis. Catalyzes the NADPH-dependent reduction of 7-cyano-7-deazaguanine (preQ0) to 7-aminomethyl-7-deazaguanine (preQ1). This is NADPH-dependent 7-cyano-7-deazaguanine reductase from Bacillus cytotoxicus (strain DSM 22905 / CIP 110041 / 391-98 / NVH 391-98).